Reading from the N-terminus, the 152-residue chain is Single-stranded DNA-binding protein, mitochondrial (152 aa).

The N-terminal 16 residues, 1–16 (MFRRPVLQVFRQFVRH), are a transit peptide targeting the mitochondrion. The 112-residue stretch at 30 to 141 (LNRVQLLGRV…IIAGKKLVVH (112 aa)) folds into the SSB domain. Residues serine 67 and serine 79 each carry the phosphoserine modification. Lysine 113 is subject to N6-acetyllysine. The residue at position 122 (lysine 122) is an N6-succinyllysine.

In terms of assembly, homotetramer. Interacts with MPG/AAG, through inhibition of its glycosylase activity it potentially prevents formation of DNA breaks in ssDNA, ensuring that base removal primarily occurs in dsDNA. Interacts with POLDIP2. Interacts with PRIMPOL. In terms of tissue distribution, expressed in all the layers of the retina (at protein level).

It is found in the mitochondrion. Its subcellular location is the mitochondrion matrix. The protein localises to the mitochondrion nucleoid. Functionally, binds preferentially and cooperatively to pyrimidine rich single-stranded DNA (ss-DNA). In vitro, required to maintain the copy number of mitochondrial DNA (mtDNA) and plays a crucial role during mtDNA replication by stimulating the activity of the replisome components POLG and TWNK at the replication fork. Promotes the activity of the gamma complex polymerase POLG, largely by organizing the template DNA and eliminating secondary structures to favor ss-DNA conformations that facilitate POLG activity. In addition it is able to promote the 5'-3' unwinding activity of the mtDNA helicase TWNK. May also function in mtDNA repair. The sequence is that of Single-stranded DNA-binding protein, mitochondrial (Ssbp1) from Mus musculus (Mouse).